The sequence spans 556 residues: Formate--tetrahydrofolate ligase (556 aa).

Thr-65–Ser-72 serves as a coordination point for ATP.

The protein belongs to the formate--tetrahydrofolate ligase family.

It catalyses the reaction (6S)-5,6,7,8-tetrahydrofolate + formate + ATP = (6R)-10-formyltetrahydrofolate + ADP + phosphate. The protein operates within one-carbon metabolism; tetrahydrofolate interconversion. The chain is Formate--tetrahydrofolate ligase from Clostridium novyi (strain NT).